The sequence spans 335 residues: Protease HtpX homolog (335 aa).

3 helical membrane-spanning segments follow: residues 9-29, 42-62, and 64-84; these read VYMM…STIA, LFTS…AIIY, and ILAY…LLII. A Zn(2+)-binding site is contributed by H168. The active site involves E169. A Zn(2+)-binding site is contributed by H172. A run of 2 helical transmembrane segments spans residues 179–199 and 213–233; these read AVML…YALL and AAIG…VLAF. Zn(2+) is bound at residue E238.

The protein belongs to the peptidase M48B family. Zn(2+) serves as cofactor.

The protein resides in the cell membrane. This Archaeoglobus fulgidus (strain ATCC 49558 / DSM 4304 / JCM 9628 / NBRC 100126 / VC-16) protein is Protease HtpX homolog.